A 201-amino-acid polypeptide reads, in one-letter code: NAD(P)H-dependent FMN reductase ntnL (201 aa).

FMN contacts are provided by residues Arg-12, Glu-90–Gly-93, and Tyr-120.

In terms of assembly, homodimer.

The catalysed reaction is FMNH2 + NADP(+) = FMN + NADPH + 2 H(+). The enzyme catalyses FMNH2 + NAD(+) = FMN + NADH + 2 H(+). The protein operates within secondary metabolite biosynthesis; terpenoid biosynthesis. In terms of biological role, NAD(P)H-dependent FMN reductase; part of the gene cluster that mediates the biosynthesis of the meroterpenoids nectripenoids A and B, as well as cochliquninone D and isocochliquninone E. The pathway probably begins with the HR-PKS ntnH that catalyzes two chain-extension steps to form a reduced triketide, which then primes the SAT domain in the NR-PKS ntnG to initiate three more cycles of extension to give a linear hexaketide corresponding to the polyketide part of nectripenoids. The FAD-dependent monooxygenase ntnJ then performs an oxidative decarboxylation at C11 of the ntnH/ntnG product, via an electrophilic aromatic hydroxylation with concomitant ipso-decarboxylation. The membrane-bound polyprenyl transferase ntnF then introduces a farnesyl group before the FAD-dependent monooxygenase ntnK functions as the first epoxidase on terminal C12'-C13' olefin, followed by a second epoxidation on C7'-C8' catalyzed by ntnA. The terpene cyclase/mutase ntnI then initiates the sequential tricyclic ring formation through protonation of the terminal epoxide and catalyzes the regioselective and stereoselective 6/6/6-tricyclic ring formation. The cytochrome P450 monooxygenase ntnM may then hydroxylate C1'. This is NAD(P)H-dependent FMN reductase ntnL from Nectria sp.